A 300-amino-acid chain; its full sequence is MSLEIVLITGMSGSGKSVALHALEDAGYYCVDNLPPELLSAFVELEHGRHSNKVAIAMDARSAGGLPHLPGQLERLQRQGVVPHLVFLDATTGTLVRRFSETRRRHPLSQGPVAEGRRALVQDIETERELLGDLREKSHVIDTSHLRSSQLQSYIKELIAAPVGQMTLVFQSFGFKHGLPSDSDYVFDVRMLPNPHYEPQLRPLTGMDAPVAEFLRQQPGVDQMRRDIQQFLESWLDMMASNHRSYVTVAIGCTGGQHRSVFLVEELARHFAPRWPTLCRHRSLDSRPTLKPADLLAHDV.

ATP is bound at residue 10 to 17 (GMSGSGKS). 59-62 (DARS) is a binding site for GTP.

This sequence belongs to the RapZ-like family.

Functionally, displays ATPase and GTPase activities. This Delftia acidovorans (strain DSM 14801 / SPH-1) protein is Nucleotide-binding protein Daci_5422.